We begin with the raw amino-acid sequence, 713 residues long: Cadherin-13 (713 aa).

The N-terminal stretch at 1–22 (MQPRTPLVLCVLLSQVLLLTSA) is a signal peptide. Residues 23–138 (EDLDCIPGFQ…RTSPVPRQKR (116 aa)) constitute a propeptide that is removed on maturation. Residues Asn-52 and Asn-86 are each glycosylated (N-linked (GlcNAc...) asparagine). Cadherin domains are found at residues 139–245 (SIVV…RPIF), 246–363 (REGP…SPKF), 364–477 (TKKE…GPVF), 478–585 (YPDP…APFI), and 584–690 (FIYP…VDSN). N-linked (GlcNAc...) asparagine glycosylation is found at Asn-382, Asn-489, Asn-500, Asn-530, Asn-598, Asn-638, and Asn-671. Asn-690 carries GPI-anchor amidated asparagine lipidation. Residues 691–713 (AVGALRFSLPSLLLLSLFSLACL) constitute a propeptide, removed in mature form.

As to quaternary structure, by contrast to classical cadherins, homodimerization in trans is not mediated by cadherin EC1 domain strand-swapping, but instead through a homophilic adhesive interface which joins two elongated EC1-EC2 domains through a region near their Ca2+-binding sites to form a tetrahedral, X-like shape.

The protein localises to the cell membrane. Its subcellular location is the cytoplasm. Cadherins are calcium-dependent cell adhesion proteins. They preferentially interact with themselves in a homophilic manner in connecting cells; cadherins may thus contribute to the sorting of heterogeneous cell types. May act as a negative regulator of neural cell growth. This is Cadherin-13 (CDH13) from Pongo abelii (Sumatran orangutan).